Reading from the N-terminus, the 298-residue chain is Ribosomal RNA small subunit methyltransferase H (298 aa).

Residues 46 to 48 (GGH), aspartate 65, phenylalanine 92, aspartate 108, and histidine 115 contribute to the S-adenosyl-L-methionine site.

The protein belongs to the methyltransferase superfamily. RsmH family.

It is found in the cytoplasm. The catalysed reaction is cytidine(1402) in 16S rRNA + S-adenosyl-L-methionine = N(4)-methylcytidine(1402) in 16S rRNA + S-adenosyl-L-homocysteine + H(+). Specifically methylates the N4 position of cytidine in position 1402 (C1402) of 16S rRNA. In Nostoc punctiforme (strain ATCC 29133 / PCC 73102), this protein is Ribosomal RNA small subunit methyltransferase H.